Reading from the N-terminus, the 175-residue chain is Small ribosomal subunit protein uS7 (175 aa).

This sequence belongs to the universal ribosomal protein uS7 family. Part of the 30S ribosomal subunit. Contacts proteins S9 and S11.

In terms of biological role, one of the primary rRNA binding proteins, it binds directly to 16S rRNA where it nucleates assembly of the head domain of the 30S subunit. Is located at the subunit interface close to the decoding center, probably blocks exit of the E-site tRNA. This is Small ribosomal subunit protein uS7 from Legionella pneumophila (strain Paris).